The primary structure comprises 96 residues: YcgL domain-containing protein Csal_1462 (96 aa).

In terms of domain architecture, YcgL spans 4–88 (RLCEIFKSPR…ARESYLLDLY (85 aa)).

This chain is YcgL domain-containing protein Csal_1462, found in Chromohalobacter salexigens (strain ATCC BAA-138 / DSM 3043 / CIP 106854 / NCIMB 13768 / 1H11).